The primary structure comprises 307 residues: Putative ankyrin repeat protein R229 (307 aa).

ANK repeat units follow at residues 135 to 164 (ASRVILGNRLNLRDISTFKYLMSLGVDINV), 165 to 194 (DNDKPLRWAASRGYYGLVKFLLDNGANVHA), 196 to 224 (DDEAVQLASRNGYLNVVKILVEYGANVNA), 226 to 254 (NDYAIQMACKYGYNEIVRFLVFNGANPMA), 256 to 284 (RYYPIEIATEFGNKLIVRFLLHQDKSMVY), and 286 to 307 (SYAMDIAVRNENWDLLNVLLLD).

This is Putative ankyrin repeat protein R229 from Acanthamoeba polyphaga (Amoeba).